The following is a 144-amino-acid chain: MRKLGIDLGKIRTGFAISDDSNKISLPLKTFIQKNANFNNIILEIKKILLEYQIDTIVIGLPIKINNEKTKSTIFVENFKKHLEKEINLPIFFVNEYNSSVLANLSINEMKSKKRKTIVDKISAQIILNDFLNNYFIKEKYDEN.

This sequence belongs to the YqgF nuclease family.

It localises to the cytoplasm. In terms of biological role, could be a nuclease involved in processing of the 5'-end of pre-16S rRNA. This chain is Putative pre-16S rRNA nuclease, found in Mycoplasma mobile (strain ATCC 43663 / 163K / NCTC 11711) (Mesomycoplasma mobile).